The sequence spans 179 residues: Negative modulator of initiation of replication (179 aa).

The protein belongs to the SeqA family. In terms of assembly, homodimer. Polymerizes to form helical filaments.

Its subcellular location is the cytoplasm. Negative regulator of replication initiation, which contributes to regulation of DNA replication and ensures that replication initiation occurs exactly once per chromosome per cell cycle. Binds to pairs of hemimethylated GATC sequences in the oriC region, thus preventing assembly of replication proteins and re-initiation at newly replicated origins. Repression is relieved when the region becomes fully methylated. The protein is Negative modulator of initiation of replication of Vibrio atlanticus (strain LGP32) (Vibrio splendidus (strain Mel32)).